The sequence spans 234 residues: Geranylgeranylglyceryl phosphate synthase (234 aa).

2 residues coordinate Mg(2+): Asp-24 and Ser-52. Sn-glycerol 1-phosphate-binding positions include 172 to 178, 203 to 204, and 225 to 226; these read YLEAGSG, GG, and GT.

This sequence belongs to the GGGP/HepGP synthase family. Group II subfamily. As to quaternary structure, homodimer. Mg(2+) serves as cofactor.

The catalysed reaction is sn-glycerol 1-phosphate + (2E,6E,10E)-geranylgeranyl diphosphate = sn-3-O-(geranylgeranyl)glycerol 1-phosphate + diphosphate. Functionally, prenyltransferase that catalyzes the transfer of the geranylgeranyl moiety of geranylgeranyl diphosphate (GGPP) to the C3 hydroxyl of sn-glycerol-1-phosphate (G1P). The chain is Geranylgeranylglyceryl phosphate synthase from Zunongwangia profunda (strain DSM 18752 / CCTCC AB 206139 / SM-A87) (Wangia profunda).